A 453-amino-acid chain; its full sequence is UDP-glycosyltransferase 74E2 (453 aa).

The active-site Proton acceptor is His-17. His-17 is an an anthocyanidin binding site. Asp-109 acts as the Charge relay in catalysis. Positions 131, 334, 349, 352, 353, 354, 357, 373, and 374 each coordinate UDP-alpha-D-glucose.

Belongs to the UDP-glycosyltransferase family. Expressed in roots, cotyledons and leaf hydathodes.

The catalysed reaction is (indol-3-yl)butanoate + UDP-alpha-D-glucose = 4-(indol-3-yl)butanoyl-beta-D-glucose + UDP. In terms of biological role, glucosyltransferase that acts on the auxin indole-3-butyric acid (IBA). Mediates abiotic stress responses and stress-induced morphological adaptations by regulating auxin homeostasis. Possesses low activity in vitro on jasmonate (JA) and the synthetic auxin analog naphthaleneacetic acid (NAA). This chain is UDP-glycosyltransferase 74E2 (UGT74E2), found in Arabidopsis thaliana (Mouse-ear cress).